A 192-amino-acid chain; its full sequence is Pyridoxal 5'-phosphate synthase subunit PdxT (192 aa).

46 to 48 (GES) is a binding site for L-glutamine. Cys-76 functions as the Nucleophile in the catalytic mechanism. L-glutamine contacts are provided by residues Arg-103 and 131 to 132 (IR). Catalysis depends on charge relay system residues His-167 and Glu-169.

Belongs to the glutaminase PdxT/SNO family. As to quaternary structure, in the presence of PdxS, forms a dodecamer of heterodimers. Only shows activity in the heterodimer.

The enzyme catalyses aldehydo-D-ribose 5-phosphate + D-glyceraldehyde 3-phosphate + L-glutamine = pyridoxal 5'-phosphate + L-glutamate + phosphate + 3 H2O + H(+). It catalyses the reaction L-glutamine + H2O = L-glutamate + NH4(+). It participates in cofactor biosynthesis; pyridoxal 5'-phosphate biosynthesis. Its function is as follows. Catalyzes the hydrolysis of glutamine to glutamate and ammonia as part of the biosynthesis of pyridoxal 5'-phosphate. The resulting ammonia molecule is channeled to the active site of PdxS. The protein is Pyridoxal 5'-phosphate synthase subunit PdxT of Koribacter versatilis (strain Ellin345).